The sequence spans 206 residues: dTTP/UTP pyrophosphatase (206 aa).

The active-site Proton acceptor is D79.

It belongs to the Maf family. YhdE subfamily. Requires a divalent metal cation as cofactor.

The protein resides in the cytoplasm. It carries out the reaction dTTP + H2O = dTMP + diphosphate + H(+). It catalyses the reaction UTP + H2O = UMP + diphosphate + H(+). In terms of biological role, nucleoside triphosphate pyrophosphatase that hydrolyzes dTTP and UTP. May have a dual role in cell division arrest and in preventing the incorporation of modified nucleotides into cellular nucleic acids. This chain is dTTP/UTP pyrophosphatase, found in Rhizobium etli (strain ATCC 51251 / DSM 11541 / JCM 21823 / NBRC 15573 / CFN 42).